The primary structure comprises 655 residues: SRSF protein kinase 1 (655 aa).

The segment at 1–57 (MERKVLALQARKKRTKAKKDKAQRKPETQHRGSAPHSESDLPEQEEEILGSDDDEQE) is disordered. The span at 10–22 (ARKKRTKAKKDKA) shows a compositional bias: basic residues. Positions 40–57 (DLPEQEEEILGSDDDEQE) are enriched in acidic residues. Residue Ser51 is modified to Phosphoserine; by CK2. Residues 80–653 (YHVIRKLGWG…AAECLRHPWL (574 aa)) enclose the Protein kinase domain. ATP contacts are provided by residues 86–94 (LGWGHFSTV) and Lys109. The active-site Proton acceptor is the Asp213. 2 disordered regions span residues 238-341 (WQRS…QDQT) and 397-417 (FLSSQNGDSSTSQETDSCTPI). Residues 265–276 (KNKKKKLKKKQK) are compositionally biased toward basic residues. Composition is skewed to basic and acidic residues over residues 277–288 (RQAELLEKRMQE) and 304–318 (NKQEESESPVERPLK). 3 positions are modified to phosphoserine: Ser309, Ser311, and Ser333. Ser555 bears the Phosphoserine; by CK2 mark.

The protein belongs to the protein kinase superfamily. CMGC Ser/Thr protein kinase family. As to quaternary structure, monomer. Found in a multisubunit complex containing seven proteins, named toposome, which separates entangled circular chromatin DNA during chromosome segregation. Interacts with HHV-1 ICP27 protein. Interacts with DNAJC8 and AHSA1/AHA1 and this mediates formation of a complex with the Hsp70 /Hsp90 machinery. Binds to IGF2BP1, SYNCRIP, HNRNPA2B1 and HNRNPC. Interacts with SAFB/SAFB1 and SAFB2 which inhibits its activity. Mg(2+) serves as cofactor.

It localises to the cytoplasm. The protein localises to the nucleus. The protein resides in the nucleoplasm. It is found in the nucleus matrix. Its subcellular location is the microsome. It localises to the nucleus speckle. The protein localises to the chromosome. The catalysed reaction is L-seryl-[protein] + ATP = O-phospho-L-seryl-[protein] + ADP + H(+). It catalyses the reaction L-threonyl-[protein] + ATP = O-phospho-L-threonyl-[protein] + ADP + H(+). With respect to regulation, activated by phosphorylation on Ser-51 and Ser-555. In terms of biological role, serine/arginine-rich protein-specific kinase which specifically phosphorylates its substrates at serine residues located in regions rich in arginine/serine dipeptides, known as RS domains and is involved in the phosphorylation of SR splicing factors and the regulation of splicing. Plays a central role in the regulatory network for splicing, controlling the intranuclear distribution of splicing factors in interphase cells and the reorganization of nuclear speckles during mitosis. Can influence additional steps of mRNA maturation, as well as other cellular activities, such as chromatin reorganization in somatic and sperm cells and cell cycle progression. Phosphorylates SFRS2, ZRSR2, LBR and PRM1. Phosphorylates SRSF1 using a directional (C-terminal to N-terminal) and a dual-track mechanism incorporating both processive phosphorylation (in which the kinase stays attached to the substrate after each round of phosphorylation) and distributive phosphorylation steps (in which the kinase and substrate dissociate after each phosphorylation event). The RS domain of SRSF1 binds first to a docking groove in the large lobe of the kinase domain of SRPK1. This induces certain structural changes in SRPK1 and/or RRM2 domain of SRSF1, allowing RRM2 to bind the kinase and initiate phosphorylation. The cycles continue for several phosphorylation steps in a processive manner (steps 1-8) until the last few phosphorylation steps (approximately steps 9-12). During that time, a mechanical stress induces the unfolding of the beta-4 motif in RRM2, which then docks at the docking groove of SRPK1. This also signals RRM2 to begin to dissociate, which facilitates SRSF1 dissociation after phosphorylation is completed. Can mediate hepatitis B virus (HBV) core protein phosphorylation. It plays a negative role in the regulation of HBV replication through a mechanism not involving the phosphorylation of the core protein but by reducing the packaging efficiency of the pregenomic RNA (pgRNA) without affecting the formation of the viral core particles. Can induce splicing of exon 10 in MAPT/TAU. This chain is SRSF protein kinase 1, found in Pongo abelii (Sumatran orangutan).